The sequence spans 763 residues: Thyrotropin receptor (763 aa).

An N-terminal signal peptide occupies residues 1 to 21 (MRQTPLLQLALLLSLPRSLGG). Over 22–412 (KGCPSPPCEC…EFNPCEDIMG (391 aa)) the chain is Extracellular. A disulfide bond links Cys-31 and Cys-41. N-linked (GlcNAc...) asparagine glycosylation is found at Asn-77 and Asn-99. LRR repeat units lie at residues 100–124 (LSKMTHIEIRNTRSLTYIDPGALKE), 125–150 (LPLLKFLGIFNTGLGVFPDLTKVYST), 151–174 (DVFFILEITDNPYMTSIPANAFQG), 176–199 (CNETLTLKLYNNGFTSIQGHAFNG), 201–223 (KLDAVYLNKNKYLTAIDQDAFGG), 225–248 (YSGPTLLDVSYTSVTALPSKGLEH), and 264–288 (PLTLSFLHLTRADLSYPSHCCAFKN). Asn-177 and Asn-198 each carry an N-linked (GlcNAc...) asparagine glycan. N-linked (GlcNAc...) asparagine glycosylation is present at Asn-302. Tyr-384 is subject to Sulfotyrosine. A helical membrane pass occupies residues 413–440 (YKFLRIVVWFVSLLALLGNVFVLIILLT). The Cytoplasmic portion of the chain corresponds to 441–449 (SHYKLTVPR). The chain crosses the membrane as a helical span at residues 450–472 (FLMCNLAFADFCMGMYLLLIASV). Over 473-493 (DLYTHSEYYNHAIDWQTGPGC) the chain is Extracellular. Residues Cys-493 and Cys-568 are joined by a disulfide bond. Residues 494–516 (NAAGFFTVFASELSVYTLTVITL) form a helical membrane-spanning segment. Residues 517-536 (ERWYAITFAMRLDRKMRLRH) lie on the Cytoplasmic side of the membrane. The chain crosses the membrane as a helical span at residues 537-559 (AYAIMVGGWVCCFLLALLPLVGI). Over 560-579 (SSYAKVSICLPMDTETPLAL) the chain is Extracellular. A helical transmembrane segment spans residues 580–601 (AYIILVLLLNIVAFIIVCSCYV). The Cytoplasmic portion of the chain corresponds to 602–624 (KIYITVRNPQYNTGDKDTKIAKR). Residues 625–648 (MAVLIFTDFMCMAPISFYALSALM) traverse the membrane as a helical segment. The Extracellular segment spans residues 649–659 (NKPLITVTNSK). A helical transmembrane segment spans residues 660–681 (ILLVLFYPLNSCANPFLYAIFT). Residues 682-763 (KTFQRDVFIL…ISKEYNQTVL (82 aa)) lie on the Cytoplasmic side of the membrane. Positions 761–763 (TVL) match the PDZ-binding motif.

Belongs to the G-protein coupled receptor 1 family. FSH/LSH/TSH subfamily. Interacts with heterodimer GPHA2:GPHB5; this interaction stimulates cAMP production. Interacts (via the PDZ-binding motif) with SCRIB; regulates TSHR trafficking and function. Post-translationally, glycosylated. Sulfated. Sulfation on Tyr-384 plays a role in thyrotropin receptor binding and activation.

It localises to the cell membrane. It is found in the basolateral cell membrane. In terms of biological role, receptor for the thyroid-stimulating hormone (TSH) or thyrotropin. Also acts as a receptor for the heterodimeric glycoprotein hormone (GPHA2:GPHB5) or thyrostimulin. The activity of this receptor is mediated by G proteins which activate adenylate cyclase. Plays a central role in controlling thyroid cell metabolism. This chain is Thyrotropin receptor (TSHR), found in Felis catus (Cat).